A 76-amino-acid chain; its full sequence is ATP synthase subunit c (76 aa).

2 consecutive transmembrane segments (helical) span residues 13–33 and 55–75; these read LSVI…GILF and FIGL…ALII.

Belongs to the ATPase C chain family. F-type ATPases have 2 components, F(1) - the catalytic core - and F(0) - the membrane proton channel. F(1) has five subunits: alpha(3), beta(3), gamma(1), delta(1), epsilon(1). F(0) has three main subunits: a(1), b(2) and c(10-14). The alpha and beta chains form an alternating ring which encloses part of the gamma chain. F(1) is attached to F(0) by a central stalk formed by the gamma and epsilon chains, while a peripheral stalk is formed by the delta and b chains.

It localises to the cell membrane. In terms of biological role, f(1)F(0) ATP synthase produces ATP from ADP in the presence of a proton or sodium gradient. F-type ATPases consist of two structural domains, F(1) containing the extramembraneous catalytic core and F(0) containing the membrane proton channel, linked together by a central stalk and a peripheral stalk. During catalysis, ATP synthesis in the catalytic domain of F(1) is coupled via a rotary mechanism of the central stalk subunits to proton translocation. Functionally, key component of the F(0) channel; it plays a direct role in translocation across the membrane. A homomeric c-ring of between 10-14 subunits forms the central stalk rotor element with the F(1) delta and epsilon subunits. The sequence is that of ATP synthase subunit c from Bifidobacterium longum subsp. infantis (strain ATCC 15697 / DSM 20088 / JCM 1222 / NCTC 11817 / S12).